The primary structure comprises 350 residues: Methionine import ATP-binding protein MetN (350 aa).

The 237-residue stretch at 9–245 (LKDVDVEFHG…PQQQLTKDFI (237 aa)) folds into the ABC transporter domain. 43-50 (GYSGAGKS) provides a ligand contact to ATP.

The protein belongs to the ABC transporter superfamily. Methionine importer (TC 3.A.1.24) family. In terms of assembly, the complex is composed of two ATP-binding proteins (MetN), two transmembrane proteins (MetI) and a solute-binding protein (MetQ).

Its subcellular location is the cell membrane. The enzyme catalyses L-methionine(out) + ATP + H2O = L-methionine(in) + ADP + phosphate + H(+). It carries out the reaction D-methionine(out) + ATP + H2O = D-methionine(in) + ADP + phosphate + H(+). Its function is as follows. Part of the ABC transporter complex MetNIQ involved in methionine import. Responsible for energy coupling to the transport system. The sequence is that of Methionine import ATP-binding protein MetN from Lacticaseibacillus paracasei (strain ATCC 334 / BCRC 17002 / CCUG 31169 / CIP 107868 / KCTC 3260 / NRRL B-441) (Lactobacillus paracasei).